A 368-amino-acid polypeptide reads, in one-letter code: tRNA-specific 2-thiouridylase MnmA (368 aa).

Residues 12–19 (GMSGGVDS) and M38 each bind ATP. Residues 98–100 (NPD) form an interaction with target base in tRNA region. Residue C103 is the Nucleophile of the active site. C103 and C200 are joined by a disulfide. An ATP-binding site is contributed by G128. Residues 150–152 (KDQ) form an interaction with tRNA region. C200 (cysteine persulfide intermediate) is an active-site residue. The interval 313–314 (RY) is interaction with tRNA.

Belongs to the MnmA/TRMU family. Interacts with TusE.

Its subcellular location is the cytoplasm. The enzyme catalyses S-sulfanyl-L-cysteinyl-[protein] + uridine(34) in tRNA + AH2 + ATP = 2-thiouridine(34) in tRNA + L-cysteinyl-[protein] + A + AMP + diphosphate + H(+). In terms of biological role, catalyzes the 2-thiolation of uridine at the wobble position (U34) of tRNA(Lys), tRNA(Glu) and tRNA(Gln), leading to the formation of s(2)U34, the first step of tRNA-mnm(5)s(2)U34 synthesis. Sulfur is provided by IscS, via a sulfur-relay system. Binds ATP and its substrate tRNAs. The protein is tRNA-specific 2-thiouridylase MnmA of Pectobacterium atrosepticum (strain SCRI 1043 / ATCC BAA-672) (Erwinia carotovora subsp. atroseptica).